The sequence spans 1028 residues: Contactin-3 (1028 aa).

The first 19 residues, 1-19, serve as a signal peptide directing secretion; sequence MMLSWKQLILLSFIGCLAG. 6 Ig-like C2-type domains span residues 32–117, 122–209, 227–313, 318–402, 408–497, and 499–593; these read PSNS…AKLQ, ENFK…RVLG, PKIE…GRLT, PYWL…AELK, PDFS…LVVT, and PTRI…AELI. Disulfide bonds link Cys50-Cys100, Cys144-Cys196, Cys249-Cys297, Cys339-Cys386, and Cys431-Cys479. Asn65 and Asn193 each carry an N-linked (GlcNAc...) asparagine glycan. 3 N-linked (GlcNAc...) asparagine glycosylation sites follow: Asn377, Asn468, and Asn489. Cysteines 521 and 577 form a disulfide. Fibronectin type-III domains lie at 600-698, 703-800, 805-901, and 902-998; these read PPEN…TEEA, APSE…SAEE, APSH…TKKT, and PPSQ…TSMD. Residues 684-714 form a disordered region; sequence GEPSLPSEKVRTEEAAPEIAPSEVSGGGGSR. Residues Asn765, Asn860, Asn895, Asn913, Asn931, and Asn956 are each glycosylated (N-linked (GlcNAc...) asparagine). Ser1002 carries GPI-anchor amidated serine lipidation. Residues 1003–1028 constitute a propeptide, removed in mature form; that stretch reads TSAISNIHPLSGYMSVLLFFIVNALW.

The protein belongs to the immunoglobulin superfamily. Contactin family. As to quaternary structure, interacts with PTPRG. Specifically expressed in brain. Ectopically expressed in tumors expressing endogenous intracisternal A-type particles (IAPs).

Its subcellular location is the cell membrane. In terms of biological role, contactins mediate cell surface interactions during nervous system development. Has some neurite outgrowth-promoting activity. The sequence is that of Contactin-3 (Cntn3) from Mus musculus (Mouse).